The primary structure comprises 758 residues: Glucan endo-1,3-beta-D-glucosidase (758 aa).

Residues 1 to 34 constitute a signal peptide (tat-type signal); it reads MSHASRRRWRRATTSAATAALLCGALLTFPSAPA. Positions 38–251 are beta-sandwich subdomain; it reads VRLGSGSYTT…SGYASVALLP (214 aa). The region spanning 38–704 is the GH81 domain; the sequence is VRLGSGSYTT…QWLSTLAEFG (667 aa). An alpha/beta subdomain region spans residues 252 to 342; it reads SPDDFDRYAP…EGDRFTTELT (91 aa). Residues 352 to 704 are (alpha/beta)6 barrel subdomain; it reads TVDSADHQRL…QWLSTLAEFG (353 aa). (1,3-beta-D-glucosyl)n is bound by residues Tyr-382, Lys-386, Asp-457, His-461, Asn-532, Glu-534, and Glu-538. Asp-457 is an active-site residue. Residues Glu-534 and Glu-538 contribute to the active site.

This sequence belongs to the glycosyl hydrolase 81 family. Post-translationally, predicted to be exported by the Tat system. The position of the signal peptide cleavage has not been experimentally proven.

It localises to the secreted. The catalysed reaction is Hydrolysis of (1-&gt;3)-beta-D-glucosidic linkages in (1-&gt;3)-beta-D-glucans.. In terms of biological role, cleaves internal linkages in 1,3-beta-glucan. May contribute to biomass degradation by hydrolyzing the 1,3-beta-linked plant polymer callose that is present in decomposing plant tissue. The polypeptide is Glucan endo-1,3-beta-D-glucosidase (Thermobifida fusca (strain YX)).